Reading from the N-terminus, the 870-residue chain is Endoribonuclease YSH1 (870 aa).

The Zn(2+) site is built by His-159, His-161, Asp-163, His-164, His-256, and Asp-277. The Proton donor role is filled by His-499. His-521 provides a ligand contact to Zn(2+). A disordered region spans residues 598–627; the sequence is ITELTEEKEEADEIKEDNGETDTTQKPNES. Acidic residues predominate over residues 601–612; it reads LTEEKEEADEIK. The span at 618–627 shows a compositional bias: polar residues; it reads TDTTQKPNES.

It belongs to the metallo-beta-lactamase superfamily. RNA-metabolizing metallo-beta-lactamase-like family. CPSF2/YSH1 subfamily.

It is found in the nucleus. Component of the cleavage factor I (CF I) involved in pre-mRNA 3'-end processing. The chain is Endoribonuclease YSH1 (YSH1) from Candida albicans (strain SC5314 / ATCC MYA-2876) (Yeast).